Reading from the N-terminus, the 210-residue chain is Ras-related protein Rab-2-B (210 aa).

Gly-13–Cys-21 serves as a coordination point for GTP. The short motif at His-35–Phe-43 is the Effector region element. GTP-binding positions include Asp-61–Gln-65, Asn-119–Asp-122, and Ser-149–Lys-151. Residues Cys-208 and Cys-209 are each lipidated (S-geranylgeranyl cysteine).

It belongs to the small GTPase superfamily. Rab family.

The protein localises to the endoplasmic reticulum membrane. The protein resides in the golgi apparatus membrane. Its function is as follows. Protein transport. Probably involved in vesicular traffic. This chain is Ras-related protein Rab-2-B (RAB2B), found in Zea mays (Maize).